Here is a 134-residue protein sequence, read N- to C-terminus: Glycine cleavage system H protein (134 aa).

Residues 24-106 (TVRVGITDYA…YGAGWLLDIQ (83 aa)) form the Lipoyl-binding domain. Residue Lys-65 is modified to N6-lipoyllysine.

This sequence belongs to the GcvH family. In terms of assembly, the glycine cleavage system is composed of four proteins: P, T, L and H. (R)-lipoate is required as a cofactor.

The glycine cleavage system catalyzes the degradation of glycine. The H protein shuttles the methylamine group of glycine from the P protein to the T protein. In Mycobacterium bovis (strain ATCC BAA-935 / AF2122/97), this protein is Glycine cleavage system H protein.